The chain runs to 329 residues: Ceramide synthase hyl-2 (329 aa).

An N-linked (GlcNAc...) asparagine glycan is attached at asparagine 22. 7 helical membrane-spanning segments follow: residues 41-61 (VLTGISLIIYRFVFENYIFVP), 95-115 (ALYYTISFVCGLYLVLHESHL), 134-154 (VAWYYWIQGGFYIALVFGILF), 162-182 (FWQMLVHHFITLALIGVSWTM), 187-207 (VGTLILVSHDAVDILIDVGKI), 221-241 (FAGVLFVWVATRLVYYPFWII), and 270-290 (FIMLLLTALLILHIFWAYILF). Residues 86–298 (SRMAECAMRA…LFKIAYDTIQ (213 aa)) form the TLC domain.

Belongs to the sphingosine N-acyltransferase family. As to expression, strong expression in the gut, the posterior bulb of the pharynx, the hypoderm, and unidentified cells of the head and the tail.

It localises to the membrane. The enzyme catalyses a very long-chain fatty acyl-CoA + a sphingoid base = an N-(very-long-chain fatty acyl)-sphingoid base + CoA + H(+). It carries out the reaction a fatty acyl-CoA + sphinganine = an N-acylsphinganine + CoA + H(+). The catalysed reaction is docosanoyl-CoA + sphinganine = N-docosanoylsphinganine + CoA + H(+). It catalyses the reaction sphinganine + tetradecanoyl-CoA = N-(tetradecanoyl)-sphinganine + CoA + H(+). The enzyme catalyses eicosanoyl-CoA + sphinganine = N-eicosanoylsphinganine + CoA + H(+). It carries out the reaction 15-methylhexadecasphinganine + a fatty acyl-CoA = an N-acyl-15-methylhexadecasphinganine + CoA + H(+). Its pathway is lipid metabolism; sphingolipid metabolism. Functionally, catalyzes the acylation of sphingoid bases to form ceramides, which are key players in cell signaling events such as tolerances to heat, oxidation, and ultraviolet stress. C.elegans contain specific sphingoid bases, which are unique or different in structure compared to the sphingoid bases found in other animals. Two examples of these distinctive compounds are: 15-methylhexadecasphinganine and 15-methylhexadecasphing-4-enine. Exhibits substrate preference for long and very long fatty acyl-coA chains (C20-23). Required for adaptation of the nematode to anoxia. Anoxia tolerance may require one or more of the ceramide species that are either specifically or preferentially synthesized by HYL-2, and seems to be affected by a pathway that is parallel to that involving daf-2. This is Ceramide synthase hyl-2 (hyl-2) from Caenorhabditis elegans.